Here is a 176-residue protein sequence, read N- to C-terminus: Cystatin-related protein 1 (176 aa).

The signal sequence occupies residues 1–26 (MCKTLHGTLLLLAIFVLFLNFSHATA). Positions 27-31 (KRTRR) are excised as a propeptide. Asparagine 71 carries an N-linked (GlcNAc...) asparagine glycan. Disulfide bonds link cysteine 129-cysteine 139 and cysteine 153-cysteine 173.

This sequence belongs to the cystatin family. Prostate and lacrimal gland.

This Rattus norvegicus (Rat) protein is Cystatin-related protein 1 (Andpro).